Consider the following 162-residue polypeptide: Regulator of sigma D (162 aa).

The protein belongs to the Rsd/AlgQ family. As to quaternary structure, interacts with RpoD.

It is found in the cytoplasm. Functionally, binds RpoD and negatively regulates RpoD-mediated transcription activation by preventing the interaction between the primary sigma factor RpoD with the catalytic core of the RNA polymerase and with promoter DNA. May be involved in replacement of the RNA polymerase sigma subunit from RpoD to RpoS during the transition from exponential growth to the stationary phase. The polypeptide is Regulator of sigma D (Salmonella arizonae (strain ATCC BAA-731 / CDC346-86 / RSK2980)).